Reading from the N-terminus, the 627-residue chain is Carene synthase 2, chloroplastic (627 aa).

The N-terminal 36 residues, 1 to 36 (MSVISIVPLASKSCLYKSLMSSTHELKALCRPIVTL), are a transit peptide targeting the chloroplast. Mg(2+)-binding residues include Asp-378, Asp-382, and Asp-530. The DDXXD motif motif lies at 378–382 (DDMYD).

Belongs to the terpene synthase family. Tpsd subfamily. Mg(2+) is required as a cofactor. The cofactor is Mn(2+).

It localises to the plastid. The protein localises to the chloroplast. The enzyme catalyses (2E)-geranyl diphosphate = (+)-car-3-ene + diphosphate. The protein operates within terpene metabolism; oleoresin biosynthesis. Terpene synthase (TPS) involved in defensive oleoresin formation in conifers in response to insect attack (e.g. white pine weevil P.strobi) or other injury. The chain is Carene synthase 2, chloroplastic (TPS-3car2) from Picea sitchensis (Sitka spruce).